Here is a 347-residue protein sequence, read N- to C-terminus: MAAAIRHDWQHDELQALFDLPFPELLFRAAAVHREHFDPAQVQVSTLLSVKTGGCPEDCAYCPQAQRYSTGVNAQKLMETDAVLAKARQAKAAGASRFCMGAAWRSPKDRDIPKVAAMIAGVKALGLETCATLGMLSGEQARALKDAGLDYYNHNLDTAPDYYDSIIHTRQYQDRLDTLEHVRDAGLKTCCGGIVGMGETRAQRVGLLLALASLPAHPDSVPINKLVQVAGTPLHGSAELDPFEFVRMIAVARIAMPRSMVRLSAGREAMSDELQALCFLAGANSIFYGDKLLTTGNPESERDLALFARLGLQPMAVQVDAEGHDHGGTVHADISADTPGCGCAHAA.

The Radical SAM core domain maps to 40 to 258 (AQVQVSTLLS…IAVARIAMPR (219 aa)). [4Fe-4S] cluster-binding residues include cysteine 55, cysteine 59, and cysteine 62. Cysteine 99, cysteine 130, cysteine 190, and arginine 262 together coordinate [2Fe-2S] cluster.

Belongs to the radical SAM superfamily. Biotin synthase family. In terms of assembly, homodimer. Requires [4Fe-4S] cluster as cofactor. It depends on [2Fe-2S] cluster as a cofactor.

The catalysed reaction is (4R,5S)-dethiobiotin + (sulfur carrier)-SH + 2 reduced [2Fe-2S]-[ferredoxin] + 2 S-adenosyl-L-methionine = (sulfur carrier)-H + biotin + 2 5'-deoxyadenosine + 2 L-methionine + 2 oxidized [2Fe-2S]-[ferredoxin]. The protein operates within cofactor biosynthesis; biotin biosynthesis; biotin from 7,8-diaminononanoate: step 2/2. Its function is as follows. Catalyzes the conversion of dethiobiotin (DTB) to biotin by the insertion of a sulfur atom into dethiobiotin via a radical-based mechanism. The chain is Biotin synthase from Stenotrophomonas maltophilia (strain K279a).